The sequence spans 222 residues: Thiopurine S-methyltransferase (222 aa).

Residues W10, L45, E66, and R123 each contribute to the S-adenosyl-L-methionine site.

The protein belongs to the class I-like SAM-binding methyltransferase superfamily. TPMT family.

It localises to the cytoplasm. The catalysed reaction is S-adenosyl-L-methionine + a thiopurine = S-adenosyl-L-homocysteine + a thiopurine S-methylether.. The sequence is that of Thiopurine S-methyltransferase from Pseudomonas fluorescens (strain ATCC BAA-477 / NRRL B-23932 / Pf-5).